A 557-amino-acid chain; its full sequence is T-complex protein 1 subunit eta (557 aa).

N-acetylalanine is present on alanine 2. The tract at residues 529–557 (PKSESAQGDAAGAMGRGRGGGRGRGMRRR) is disordered. The segment covering 547–557 (GGGRGRGMRRR) has biased composition (basic residues).

This sequence belongs to the TCP-1 chaperonin family. In terms of assembly, heterooligomeric complex of about 850 to 900 kDa that forms two stacked rings, 12 to 16 nm in diameter. Interacts with KNAT1.

It is found in the cytoplasm. In terms of biological role, molecular chaperone; assists the folding of proteins upon ATP hydrolysis. Known to play a role, in vitro, in the folding of actin and tubulin. In Arabidopsis thaliana (Mouse-ear cress), this protein is T-complex protein 1 subunit eta.